Reading from the N-terminus, the 449-residue chain is Phosphoglucosamine mutase (449 aa).

Ser100 acts as the Phosphoserine intermediate in catalysis. Residues Ser100, Asp241, Asp243, and Asp245 each coordinate Mg(2+). A Phosphoserine modification is found at Ser100.

The protein belongs to the phosphohexose mutase family. Requires Mg(2+) as cofactor. In terms of processing, activated by phosphorylation.

It catalyses the reaction alpha-D-glucosamine 1-phosphate = D-glucosamine 6-phosphate. In terms of biological role, catalyzes the conversion of glucosamine-6-phosphate to glucosamine-1-phosphate. The polypeptide is Phosphoglucosamine mutase (Clostridium botulinum (strain Langeland / NCTC 10281 / Type F)).